The sequence spans 263 residues: MNTFKTYADRAARHPNGCAKALFELMERKQTNLSIAADVTTKKELLHIADACGPYICILKTHIDIIDDFDEDLVAQLCELAKKHDFLLFEDRKFADIGNTVKHQYGKGVYKIASWAHITNAHTVPGEGIITGLREVGLPLGRGLLLLAEMSSKGALTKGSYTTESVEMARRNQDFVFGFIAQHKMNEKDDEDFVVMAPGVGLDVKGDGLGQQYRTPYQVIVESGCDVIIVGRGIYGNPDQIEFQAKRYKEAGWNAYLERVQKH.

Substrate-binding positions include Asp38, 60–62 (KTH), 91–100 (DRKFADIGNT), Tyr213, and Arg232. Lys93 functions as the Proton donor in the catalytic mechanism.

It belongs to the OMP decarboxylase family.

It catalyses the reaction orotidine 5'-phosphate + H(+) = UMP + CO2. The protein operates within pyrimidine metabolism; UMP biosynthesis via de novo pathway; UMP from orotate: step 2/2. This chain is Orotidine 5'-phosphate decarboxylase (PYR4), found in Rhizomucor pusillus.